We begin with the raw amino-acid sequence, 175 residues long: NADH-ubiquinone oxidoreductase chain 6 (175 aa).

A run of 5 helical transmembrane segments spans residues 1–21, 25–45, 47–67, 88–108, and 149–169; these read MMTYIVFILSVIFVVSFVGFS, SPIYGGLVLIVSGGVGCGIIM, FGGSFLGLMVFLIYLGGMLVV, TVMGVFLLGLLMEVMLVLYVL, and YGAWVVIVTGWSLLVGVLVIL.

It belongs to the complex I subunit 6 family. Core subunit of respiratory chain NADH dehydrogenase (Complex I) which is composed of 45 different subunits.

It is found in the mitochondrion inner membrane. The catalysed reaction is a ubiquinone + NADH + 5 H(+)(in) = a ubiquinol + NAD(+) + 4 H(+)(out). Core subunit of the mitochondrial membrane respiratory chain NADH dehydrogenase (Complex I) which catalyzes electron transfer from NADH through the respiratory chain, using ubiquinone as an electron acceptor. Essential for the catalytic activity and assembly of complex I. This chain is NADH-ubiquinone oxidoreductase chain 6 (MT-ND6), found in Equus caballus (Horse).